The following is a 246-amino-acid chain: MIKSFFAALSFISRLPVPARLSQGLEIEQYQRSIVTFPLVGLLLGAIAGAVALLLQPWCGVPLAALFGVLALALLTGGFHLDGLADTCDGIFSARTRDRMLEIMRDSRLGTHGGLALIFVLVAKVLVIGELLLRDTHPIAALAAACAVGRGMAVLLMYRHRYAREKGLGNLFIGKVSLQQTLVTMAMGVALATVLLGLQGLRAALITLVLIWGLGWALKRTLGGQTGDTLGAAIELGELLFLLALL.

Transmembrane regions (helical) follow at residues 34-54 (IVTF…VALL), 59-79 (CGVP…TGGF), 113-133 (GGLA…ELLL), 138-158 (PIAA…LLMY), 171-191 (LFIG…GVAL), and 194-214 (VLLG…IWGL).

Belongs to the CobS family. Mg(2+) is required as a cofactor.

It localises to the cell inner membrane. The catalysed reaction is alpha-ribazole + adenosylcob(III)inamide-GDP = adenosylcob(III)alamin + GMP + H(+). It carries out the reaction alpha-ribazole 5'-phosphate + adenosylcob(III)inamide-GDP = adenosylcob(III)alamin 5'-phosphate + GMP + H(+). The protein operates within cofactor biosynthesis; adenosylcobalamin biosynthesis; adenosylcobalamin from cob(II)yrinate a,c-diamide: step 7/7. Joins adenosylcobinamide-GDP and alpha-ribazole to generate adenosylcobalamin (Ado-cobalamin). Also synthesizes adenosylcobalamin 5'-phosphate from adenosylcobinamide-GDP and alpha-ribazole 5'-phosphate. The sequence is that of Adenosylcobinamide-GDP ribazoletransferase from Klebsiella pneumoniae (strain 342).